The sequence spans 141 residues: uncharacterized protein (141 aa).

This is an uncharacterized protein from Borreliella burgdorferi (strain ATCC 35210 / DSM 4680 / CIP 102532 / B31) (Borrelia burgdorferi).